The primary structure comprises 87 residues: Down syndrome critical region protein 10 (87 aa).

Expressed in placenta and testis.

This is Down syndrome critical region protein 10 (DSCR10) from Homo sapiens (Human).